The sequence spans 129 residues: uncharacterized protein (129 aa).

A signal peptide spans 1-24; it reads MAFGWHSMHGSIIWFLQIAQLSTA. Transmembrane regions (helical) follow at residues 38 to 58 and 95 to 115; these read ISNL…CAIF and IAHI…FTPL.

The protein resides in the membrane. This is an uncharacterized protein from Saccharomyces cerevisiae (strain ATCC 204508 / S288c) (Baker's yeast).